We begin with the raw amino-acid sequence, 264 residues long: Thymidylate synthase (264 aa).

DUMP contacts are provided by residues arginine 21 and arginine 126–arginine 127. The Nucleophile role is filled by cysteine 146. Residues arginine 166 to aspartate 169, asparagine 177, and histidine 207 to tyrosine 209 each bind dUMP. Aspartate 169 lines the (6R)-5,10-methylene-5,6,7,8-tetrahydrofolate pocket. Residue alanine 263 participates in (6R)-5,10-methylene-5,6,7,8-tetrahydrofolate binding.

The protein belongs to the thymidylate synthase family. Bacterial-type ThyA subfamily. In terms of assembly, homodimer.

It localises to the cytoplasm. The catalysed reaction is dUMP + (6R)-5,10-methylene-5,6,7,8-tetrahydrofolate = 7,8-dihydrofolate + dTMP. The protein operates within pyrimidine metabolism; dTTP biosynthesis. In terms of biological role, catalyzes the reductive methylation of 2'-deoxyuridine-5'-monophosphate (dUMP) to 2'-deoxythymidine-5'-monophosphate (dTMP) while utilizing 5,10-methylenetetrahydrofolate (mTHF) as the methyl donor and reductant in the reaction, yielding dihydrofolate (DHF) as a by-product. This enzymatic reaction provides an intracellular de novo source of dTMP, an essential precursor for DNA biosynthesis. The protein is Thymidylate synthase of Bradyrhizobium diazoefficiens (strain JCM 10833 / BCRC 13528 / IAM 13628 / NBRC 14792 / USDA 110).